A 598-amino-acid polypeptide reads, in one-letter code: NADH-quinone oxidoreductase subunit C/D (598 aa).

Residues 1 to 188 form an NADH dehydrogenase I subunit C region; it reads MTDSTTHDAL…DPFVLTKQKE (188 aa). Positions 212 to 598 are NADH dehydrogenase I subunit D; sequence DFMFLNLGPN…IDFVMSDVDR (387 aa).

This sequence in the N-terminal section; belongs to the complex I 30 kDa subunit family. It in the C-terminal section; belongs to the complex I 49 kDa subunit family. As to quaternary structure, NDH-1 is composed of 13 different subunits. Subunits NuoB, CD, E, F, and G constitute the peripheral sector of the complex.

The protein localises to the cell inner membrane. It carries out the reaction a quinone + NADH + 5 H(+)(in) = a quinol + NAD(+) + 4 H(+)(out). Its function is as follows. NDH-1 shuttles electrons from NADH, via FMN and iron-sulfur (Fe-S) centers, to quinones in the respiratory chain. The immediate electron acceptor for the enzyme in this species is believed to be ubiquinone. Couples the redox reaction to proton translocation (for every two electrons transferred, four hydrogen ions are translocated across the cytoplasmic membrane), and thus conserves the redox energy in a proton gradient. This is NADH-quinone oxidoreductase subunit C/D from Serratia proteamaculans (strain 568).